A 160-amino-acid chain; its full sequence is NADH-quinone oxidoreductase subunit B (160 aa).

[4Fe-4S] cluster-binding residues include Cys39, Cys40, Cys104, and Cys135.

It belongs to the complex I 20 kDa subunit family. In terms of assembly, NDH-1 is composed of 14 different subunits. Subunits NuoB, C, D, E, F, and G constitute the peripheral sector of the complex. [4Fe-4S] cluster is required as a cofactor.

The protein localises to the cell membrane. The catalysed reaction is a quinone + NADH + 5 H(+)(in) = a quinol + NAD(+) + 4 H(+)(out). Its function is as follows. NDH-1 shuttles electrons from NADH, via FMN and iron-sulfur (Fe-S) centers, to quinones in the respiratory chain. The immediate electron acceptor for the enzyme in this species is believed to be a menaquinone. Couples the redox reaction to proton translocation (for every two electrons transferred, four hydrogen ions are translocated across the cytoplasmic membrane), and thus conserves the redox energy in a proton gradient. The sequence is that of NADH-quinone oxidoreductase subunit B from Amoebophilus asiaticus (strain 5a2).